The sequence spans 716 residues: Lamin-like protein (716 aa).

Composition is skewed to basic residues over residues 1–10 and 35–45; these read MDMSKKKSKR and KKTKTTTKKKA. The segment at 1 to 107 is disordered; that stretch reads MDMSKKKSKR…TIQSIPTTPI (107 aa). Over residues 62 to 107 the composition is skewed to low complexity; sequence ITTTTTSTSTTNNNNITTTSTSSQQSNGTLSSSSSPTIQSIPTTPI. Residues 130–450 are a coiled coil; the sequence is LREKDELSLI…KMRKQMADLK (321 aa). The region spanning 132 to 515 is the IF rod domain; sequence EKDELSLIHN…ELVKGFEKTV (384 aa). The Nuclear localization signal signature appears at 519–522; sequence KRKR. The disordered stretch occupies residues 519–584; it reads KRKRSKLQHE…PTGPEQSELF (66 aa). The span at 532–545 shows a compositional bias: polar residues; that stretch reads AANQDQNGMTIEEQ. Over residues 546–564 the composition is skewed to low complexity; it reads SSTSTTTTTSATGSSSSTS. Over residues 565–584 the composition is skewed to polar residues; that stretch reads HLDNIDSSKLPTGPEQSELF. The LTD domain occupies 575–698; the sequence is PTGPEQSELF…EETTTVTLPA (124 aa). A CAAX motif motif is present at residues 713–716; sequence CLIM.

It belongs to the intermediate filament family. Homodimer. Lamin dimers then assemble into dimeric head-to-tail polymers. Ultimately, two head-to-tail polymers assemble laterally into a protofilament with a uniformly shaped rod of 3.5 nm in diameter.

It localises to the nucleus lamina. Its subcellular location is the nucleus envelope. The protein localises to the nucleus inner membrane. Functionally, lamins are intermediate filament proteins that assemble into a filamentous meshwork, and which constitute the major components of the nuclear lamina, a fibrous layer on the nucleoplasmic side of the inner nuclear membrane. Lamins provide a framework for the nuclear envelope, bridging the nuclear envelope and chromatin, thereby playing an important role in nuclear assembly, chromatin organization, nuclear membrane and telomere dynamics. The structural integrity of the lamina is strictly controlled by the cell cycle, as seen by the disintegration and formation of the nuclear envelope in prophase and telophase, respectively. Helps to maintain integrity of nuclear structures in response to mechanical stress. The chain is Lamin-like protein from Dictyostelium discoideum (Social amoeba).